Reading from the N-terminus, the 297-residue chain is MSWIERILGRTSSSSSSSKSKVPEGVWTKCTSCEQVLYSEELKRNMHVCPKCNHHMRFDARTRLLSLLDQDSAQEIAAELEPQDVLKFKDLKKYKDRLTAAQKQTGEKDSFITMYGTLHNMPVVVASFNFEFMGGSMGSVVGAKFVRAAERALADNIPFICFSASGGARMQEALFSLMQMAKTSAILAKMREKGVPFISVLTDPTLGGVSASLAMLGDINIAEPKALIGFAGPRVIEQTVREKLPEGFQRAEFLLEHGAIDMIVQRKDMRDTLARLCAKMTNKPTPFKTAELIVEEA.

Positions 1 to 23 are disordered; it reads MSWIERILGRTSSSSSSSKSKVP. In terms of domain architecture, CoA carboxyltransferase N-terminal spans 26–295; the sequence is VWTKCTSCEQ…PFKTAELIVE (270 aa). Zn(2+) contacts are provided by Cys-30, Cys-33, Cys-49, and Cys-52. The segment at 30 to 52 adopts a C4-type zinc-finger fold; that stretch reads CTSCEQVLYSEELKRNMHVCPKC.

Belongs to the AccD/PCCB family. Acetyl-CoA carboxylase is a heterohexamer composed of biotin carboxyl carrier protein (AccB), biotin carboxylase (AccC) and two subunits each of ACCase subunit alpha (AccA) and ACCase subunit beta (AccD). The cofactor is Zn(2+).

It is found in the cytoplasm. It catalyses the reaction N(6)-carboxybiotinyl-L-lysyl-[protein] + acetyl-CoA = N(6)-biotinyl-L-lysyl-[protein] + malonyl-CoA. It functions in the pathway lipid metabolism; malonyl-CoA biosynthesis; malonyl-CoA from acetyl-CoA: step 1/1. Component of the acetyl coenzyme A carboxylase (ACC) complex. Biotin carboxylase (BC) catalyzes the carboxylation of biotin on its carrier protein (BCCP) and then the CO(2) group is transferred by the transcarboxylase to acetyl-CoA to form malonyl-CoA. This chain is Acetyl-coenzyme A carboxylase carboxyl transferase subunit beta, found in Actinobacillus pleuropneumoniae serotype 7 (strain AP76).